Consider the following 310-residue polypeptide: Acetylglutamate kinase (310 aa).

Substrate-binding positions include 83–84, Arg105, and Asn207; that span reads GG.

Belongs to the acetylglutamate kinase family. ArgB subfamily.

The protein resides in the cytoplasm. The enzyme catalyses N-acetyl-L-glutamate + ATP = N-acetyl-L-glutamyl 5-phosphate + ADP. It functions in the pathway amino-acid biosynthesis; L-arginine biosynthesis; N(2)-acetyl-L-ornithine from L-glutamate: step 2/4. Its function is as follows. Catalyzes the ATP-dependent phosphorylation of N-acetyl-L-glutamate. The protein is Acetylglutamate kinase of Ralstonia nicotianae (strain ATCC BAA-1114 / GMI1000) (Ralstonia solanacearum).